A 105-amino-acid polypeptide reads, in one-letter code: uncharacterized protein (105 aa).

A disordered region spans residues 58–105 (YRKKKPNHSRDNPRINSNLSTNYAQAKSVERSRSNSLNSGPNPLENAT). Composition is skewed to polar residues over residues 71-82 (RINSNLSTNYAQ) and 91-105 (SNSL…ENAT).

The protein localises to the mitochondrion. This is an uncharacterized protein from Arabidopsis thaliana (Mouse-ear cress).